We begin with the raw amino-acid sequence, 558 residues long: Tektin-5 (558 aa).

The stretch at 347-381 forms a coiled coil; the sequence is ISEETDVKNKLQTQLAKILQEIFQAENTIMLLERA.

The protein belongs to the tektin family. In terms of assembly, microtubule inner protein component of sperm flagellar doublet microtubules. Interacts with TEKT3. Post-translationally, ubiquitinated, leading to its degradation. Deubiquitinated by USP16, promoting its stability. As to expression, specifically expressed in testis.

It is found in the cytoplasm. The protein localises to the cytoskeleton. The protein resides in the flagellum axoneme. In terms of biological role, sperm-specific microtubule inner protein (MIP) part of the dynein-decorated doublet microtubules (DMTs) in flagellar axoneme. Forms an extensive interaction network in different conformations that reinforces the helix bundle composed by other tektin proteins (TEKT1 to TEKT4) and MIPs to anchor the tektin bundle onto the tubulin wall of A-tubule of the sperm flagellum. The sequence is that of Tektin-5 from Rattus norvegicus (Rat).